Here is a 206-residue protein sequence, read N- to C-terminus: Large ribosomal subunit protein bL25 (206 aa).

It belongs to the bacterial ribosomal protein bL25 family. CTC subfamily. As to quaternary structure, part of the 50S ribosomal subunit; part of the 5S rRNA/L5/L18/L25 subcomplex. Contacts the 5S rRNA. Binds to the 5S rRNA independently of L5 and L18.

This is one of the proteins that binds to the 5S RNA in the ribosome where it forms part of the central protuberance. This is Large ribosomal subunit protein bL25 from Paraburkholderia phytofirmans (strain DSM 17436 / LMG 22146 / PsJN) (Burkholderia phytofirmans).